Reading from the N-terminus, the 106-residue chain is uncharacterized protein (106 aa).

The N-terminal stretch at 1-31 (MKKKTKIILSLLAALIVILIVLPVLSPVVFT) is a signal peptide.

This is an uncharacterized protein from Bacillus subtilis (strain 168).